The chain runs to 566 residues: MKKKSLALVLATGMAVTTFGGTGSAFADSKNVLSTKKYNETVQSPEFISGDLTEATGKKAESVVFDYLNAAKGDYKLGEKSAQDSFKVKQVKKDAVTDSTVVRMQQVYEGVPVWGSTQVAHVSKDGSLKVLSGTVAPDLDKKEKLKNKNKIEGAKAIEIAQQDLGVTPKYEVEPKADLYVYQNGEETTYAYVVNLNFLDPSPGNYYYFIEADSGKVLNKFNTIDHVTNDDKSPVKQEAPKQDAKAVVKPVTGTNKVGTGKGVLGDTKSLNTTLSGSSYYLQDNTRGATIFTYDAKNRSTLPGTLWADADNVFNAAYDAAAVDAHYYAGKTYDYYKATFNRNSINDAGAPLKSTVHYGSNYNNAFWNGSQMVYGDGDGVTFTSLSGGIDVIGHELTHAVTENSSNLIYQNESGALNEAISDIFGTLVEFYDNRNPDWEIGEDIYTPGKAGDALRSMSDPTKYGDPDHYSKRYTGSSDNGGVHTNSGIINKQAYLLANGGTHYGVTVTGIGKDKLGAIYYRANTQYFTQSTTFSQARAGAVQAAADLYGANSAEVAAVKQSFSAVGVN.

Residues 1-27 form the signal peptide; that stretch reads MKKKSLALVLATGMAVTTFGGTGSAFA. Residues 28 to 249 constitute a propeptide, activation peptide; it reads DSKNVLSTKK…KQDAKAVVKP (222 aa). Ca(2+)-binding residues include Asp-307, Asp-309, Val-311, and Asp-388. A Zn(2+)-binding site is contributed by His-392. Residue Glu-393 is part of the active site. Residues His-396 and Glu-416 each coordinate Zn(2+). The Ca(2+) site is built by Glu-427, Asn-433, Asp-435, Glu-437, Glu-440, Tyr-443, Thr-444, Lys-447, and Asp-450. Residue His-481 is the Proton donor of the active site.

This sequence belongs to the peptidase M4 family. Requires Ca(2+) as cofactor. It depends on Zn(2+) as a cofactor.

Its subcellular location is the secreted. It catalyses the reaction Similar, but not identical, to that of thermolysin.. Its function is as follows. Extracellular zinc metalloprotease. In Bacillus cereus, this protein is Bacillolysin (npr).